The primary structure comprises 532 residues: Pyruvate kinase (532 aa).

R63 serves as a coordination point for substrate. K(+) contacts are provided by N65, S67, D99, and T100. 65–68 (NFSH) lines the ATP pocket. Positions 106 and 191 each coordinate ATP. E256 is a binding site for Mg(2+). G279, D280, and T312 together coordinate substrate. Position 280 (D280) interacts with Mg(2+).

The protein belongs to the pyruvate kinase family. Homotetramer. Mg(2+) is required as a cofactor. K(+) serves as cofactor.

The enzyme catalyses pyruvate + ATP = phosphoenolpyruvate + ADP + H(+). Its pathway is carbohydrate degradation; glycolysis; pyruvate from D-glyceraldehyde 3-phosphate: step 5/5. In Agaricus bisporus (White button mushroom), this protein is Pyruvate kinase (pkiA).